An 864-amino-acid chain; its full sequence is DNA mismatch repair protein MutS (864 aa).

613 to 620 (GPNMGGKS) provides a ligand contact to ATP.

It belongs to the DNA mismatch repair MutS family.

Its function is as follows. This protein is involved in the repair of mismatches in DNA. It is possible that it carries out the mismatch recognition step. This protein has a weak ATPase activity. In Actinobacillus pleuropneumoniae serotype 3 (strain JL03), this protein is DNA mismatch repair protein MutS.